The sequence spans 305 residues: Tyrosine recombinase XerD (305 aa).

Positions 3–88 (PADASVIERF…TLRAFYGLCL (86 aa)) constitute a Core-binding (CB) domain. Positions 109-299 (SLPKALTESQ…ARQHLQKLHA (191 aa)) constitute a Tyr recombinase domain. Residues arginine 149, lysine 173, histidine 251, arginine 254, and histidine 277 contribute to the active site. Catalysis depends on tyrosine 286, which acts as the O-(3'-phospho-DNA)-tyrosine intermediate.

The protein belongs to the 'phage' integrase family. XerD subfamily. Forms a cyclic heterotetrameric complex composed of two molecules of XerC and two molecules of XerD.

Its subcellular location is the cytoplasm. Its function is as follows. Site-specific tyrosine recombinase, which acts by catalyzing the cutting and rejoining of the recombining DNA molecules. The XerC-XerD complex is essential to convert dimers of the bacterial chromosome into monomers to permit their segregation at cell division. It also contributes to the segregational stability of plasmids. This chain is Tyrosine recombinase XerD, found in Xanthomonas axonopodis pv. citri (strain 306).